The sequence spans 236 residues: Aquaporin Z (236 aa).

The next 2 helical transmembrane spans lie at 12-32 (FFGT…AAGV) and 37-57 (IGYA…AYAV). The NPA 1 signature appears at 66 to 68 (NPA). 3 helical membrane-spanning segments follow: residues 92–112 (VVGA…VAGF), 136–156 (AALI…LGAT), and 163–183 (GFAP…SIPV). Residues 189 to 191 (NPA) carry the NPA 2 motif. Residues 197–217 (ALFVGGWALEQLWLFWLAPIA) traverse the membrane as a helical segment.

Belongs to the MIP/aquaporin (TC 1.A.8) family. In terms of assembly, homotetramer.

The protein resides in the cell inner membrane. It carries out the reaction H2O(in) = H2O(out). Functionally, channel that permits osmotically driven movement of water in both directions. It is involved in the osmoregulation and in the maintenance of cell turgor during volume expansion in rapidly growing cells. It mediates rapid entry or exit of water in response to abrupt changes in osmolarity. In Bordetella bronchiseptica (strain ATCC BAA-588 / NCTC 13252 / RB50) (Alcaligenes bronchisepticus), this protein is Aquaporin Z.